The chain runs to 347 residues: GMP reductase (347 aa).

108 to 131 lines the NADP(+) pocket; the sequence is ADFQKTKDIMAISDEFIFICIDIA. K(+)-binding residues include Gly-181 and Gly-183. Cys-186 (thioimidate intermediate) is an active-site residue. 216–239 lines the NADP(+) pocket; the sequence is IIGDGGCSCAGDVAKAFGGGADFV.

This sequence belongs to the IMPDH/GMPR family. GuaC type 1 subfamily. As to quaternary structure, homotetramer.

It catalyses the reaction IMP + NH4(+) + NADP(+) = GMP + NADPH + 2 H(+). Its function is as follows. Catalyzes the irreversible NADPH-dependent deamination of GMP to IMP. It functions in the conversion of nucleobase, nucleoside and nucleotide derivatives of G to A nucleotides, and in maintaining the intracellular balance of A and G nucleotides. In Vibrio campbellii (strain ATCC BAA-1116), this protein is GMP reductase.